Consider the following 141-residue polypeptide: Large ribosomal subunit protein uL16c (141 aa).

This sequence belongs to the universal ribosomal protein uL16 family. Part of the 50S ribosomal subunit.

The protein resides in the plastid. It localises to the chloroplast. This is Large ribosomal subunit protein uL16c from Zygnema circumcarinatum (Green alga).